The chain runs to 188 residues: Transcription factor FapR (188 aa).

The protein belongs to the FapR family.

Functionally, transcriptional factor involved in regulation of membrane lipid biosynthesis by repressing genes involved in fatty acid and phospholipid metabolism. The protein is Transcription factor FapR of Bacillus velezensis (strain DSM 23117 / BGSC 10A6 / LMG 26770 / FZB42) (Bacillus amyloliquefaciens subsp. plantarum).